The sequence spans 208 residues: Pyridoxine/pyridoxamine 5'-phosphate oxidase (208 aa).

FMN-binding positions include 53-58 (RTVLLK), 68-69 (YS), Lys-75, and Gln-100. Lys-58 contributes to the substrate binding site. Residues Tyr-118, Arg-122, and Ser-126 each coordinate substrate. Residues 135-136 (QS) and Trp-180 each bind FMN. 186 to 188 (RLH) is a binding site for substrate. Arg-190 is an FMN binding site.

Belongs to the pyridoxamine 5'-phosphate oxidase family. As to quaternary structure, homodimer. FMN is required as a cofactor.

It catalyses the reaction pyridoxamine 5'-phosphate + O2 + H2O = pyridoxal 5'-phosphate + H2O2 + NH4(+). The enzyme catalyses pyridoxine 5'-phosphate + O2 = pyridoxal 5'-phosphate + H2O2. Its pathway is cofactor metabolism; pyridoxal 5'-phosphate salvage; pyridoxal 5'-phosphate from pyridoxamine 5'-phosphate: step 1/1. It participates in cofactor metabolism; pyridoxal 5'-phosphate salvage; pyridoxal 5'-phosphate from pyridoxine 5'-phosphate: step 1/1. Catalyzes the oxidation of either pyridoxine 5'-phosphate (PNP) or pyridoxamine 5'-phosphate (PMP) into pyridoxal 5'-phosphate (PLP). This chain is Pyridoxine/pyridoxamine 5'-phosphate oxidase, found in Xylella fastidiosa (strain Temecula1 / ATCC 700964).